A 76-amino-acid polypeptide reads, in one-letter code: Large ribosomal subunit protein bL31 (76 aa).

Zn(2+) contacts are provided by C16, C18, C37, and C40.

It belongs to the bacterial ribosomal protein bL31 family. Type A subfamily. In terms of assembly, part of the 50S ribosomal subunit. Requires Zn(2+) as cofactor.

Functionally, binds the 23S rRNA. This Solibacter usitatus (strain Ellin6076) protein is Large ribosomal subunit protein bL31.